Reading from the N-terminus, the 416-residue chain is D-amino acid dehydrogenase (416 aa).

Residue 3-17 participates in FAD binding; sequence VVILGAGVIGVTSAW.

The protein belongs to the DadA oxidoreductase family. FAD serves as cofactor.

The enzyme catalyses a D-alpha-amino acid + A + H2O = a 2-oxocarboxylate + AH2 + NH4(+). The protein operates within amino-acid degradation; D-alanine degradation; NH(3) and pyruvate from D-alanine: step 1/1. In terms of biological role, oxidative deamination of D-amino acids. In Rhizorhabdus wittichii (strain DSM 6014 / CCUG 31198 / JCM 15750 / NBRC 105917 / EY 4224 / RW1) (Sphingomonas wittichii), this protein is D-amino acid dehydrogenase.